Here is a 311-residue protein sequence, read N- to C-terminus: Dof zinc finger protein DOF1.4 (311 aa).

A compositionally biased stretch (polar residues) spans 1–12; it reads MQSKNMIVASSH. A disordered region spans residues 1-29; it reads MQSKNMIVASSHQQQQQQQPQQPQPQLKC. Residues 13–26 show a composition bias toward low complexity; sequence QQQQQQQPQQPQPQ. The Dof-type zinc finger occupies 27 to 81; the sequence is LKCPRCDSSNTKFCYYNNYSLSQPRHFCKACKRYWTRGGTLRNVPVGGSYRKNKR. Residues C29, C32, C54, and C57 each coordinate Zn(2+). The disordered stretch occupies residues 72–110; that stretch reads VGGSYRKNKRVKRPSTATTTTASTVSTTNSSSPNNPHQI. Positions 85–107 are enriched in low complexity; it reads PSTATTTTASTVSTTNSSSPNNP.

The protein localises to the nucleus. Its function is as follows. Transcription factor that binds specifically to a 5'-AA[AG]G-3' consensus core sequence. This chain is Dof zinc finger protein DOF1.4 (DOF1.4), found in Arabidopsis thaliana (Mouse-ear cress).